The following is a 71-amino-acid chain: UPF0499 protein ACLA_083080 (71 aa).

The N-terminal stretch at 1 to 18 (MKFLNILTLAFITGMASA) is a signal peptide. 3 cysteine pairs are disulfide-bonded: Cys44–Cys58, Cys48–Cys61, and Cys54–Cys68.

Belongs to the UPF0499 family.

It localises to the secreted. The polypeptide is UPF0499 protein ACLA_083080 (Aspergillus clavatus (strain ATCC 1007 / CBS 513.65 / DSM 816 / NCTC 3887 / NRRL 1 / QM 1276 / 107)).